A 362-amino-acid polypeptide reads, in one-letter code: Glutamate 5-kinase (362 aa).

Position 3 (lysine 3) interacts with ATP. Residues serine 43, aspartate 128, and asparagine 140 each coordinate substrate. ATP contacts are provided by residues 160–161 and 202–208; these read TD and TGGMRTK. The 82-residue stretch at 267–348 folds into the PUA domain; it reads AGAILVDAGA…RDIENVLGYS (82 aa).

The protein belongs to the glutamate 5-kinase family.

Its subcellular location is the cytoplasm. The catalysed reaction is L-glutamate + ATP = L-glutamyl 5-phosphate + ADP. The protein operates within amino-acid biosynthesis; L-proline biosynthesis; L-glutamate 5-semialdehyde from L-glutamate: step 1/2. Functionally, catalyzes the transfer of a phosphate group to glutamate to form L-glutamate 5-phosphate. This is Glutamate 5-kinase from Xanthomonas oryzae pv. oryzae (strain MAFF 311018).